The sequence spans 208 residues: Redox-sensing transcriptional repressor Rex (208 aa).

Positions 16–55 (LYYRCLSELNEKGEDKVSSAVLERLLKIDAATVRRDFSYF) form a DNA-binding region, H-T-H motif. 90–95 (GVGNLG) is an NAD(+) binding site.

Belongs to the transcriptional regulatory Rex family. As to quaternary structure, homodimer.

The protein localises to the cytoplasm. Its function is as follows. Modulates transcription in response to changes in cellular NADH/NAD(+) redox state. The polypeptide is Redox-sensing transcriptional repressor Rex (Pediococcus pentosaceus (strain ATCC 25745 / CCUG 21536 / LMG 10740 / 183-1w)).